The primary structure comprises 119 residues: MKRIAFVFSTTPHGTAAGREGLDALLATSALTDELAVFFIADGVFQLLPGQKPDTVLARDYIATFKLLGLYDIEQCWVCAASLRERGLDPQTSFVVEATPLEADALRRELANYDVILRF.

It belongs to the DsrF/TusC family. In terms of assembly, heterohexamer, formed by a dimer of trimers. The hexameric TusBCD complex contains 2 copies each of TusB, TusC and TusD. The TusBCD complex interacts with TusE.

Its subcellular location is the cytoplasm. In terms of biological role, part of a sulfur-relay system required for 2-thiolation of 5-methylaminomethyl-2-thiouridine (mnm(5)s(2)U) at tRNA wobble positions. The polypeptide is Protein TusC (Escherichia fergusonii (strain ATCC 35469 / DSM 13698 / CCUG 18766 / IAM 14443 / JCM 21226 / LMG 7866 / NBRC 102419 / NCTC 12128 / CDC 0568-73)).